The sequence spans 298 residues: RNA exonuclease 4 (298 aa).

Residues 1 to 73 adopt a coiled-coil conformation; sequence MRKTVRKNKQ…EAKLKLKSAT (73 aa). Positions 125 to 275 constitute an Exonuclease domain; sequence FFSIDCKIIE…RDTIINVILY (151 aa).

This sequence belongs to the REXO4 family.

It localises to the nucleus. This is RNA exonuclease 4 (rexo4) from Dictyostelium discoideum (Social amoeba).